The following is a 181-amino-acid chain: Mannose-specific lectin (181 aa).

Positions 1–30 are cleaved as a signal peptide; that stretch reads MGRTTSSPKAMMRIATVAAILTILASTCMA. The Bulb-type lectin domain occupies 31–140; it reads RNVLTNGEGL…DIWSTGTYRR (110 aa). Residues glutamine 56, aspartate 58, asparagine 60, tyrosine 64, tryptophan 71, alanine 72, asparagine 74, glutamine 88, aspartate 90, asparagine 92, tyrosine 96, valine 103, tryptophan 104, asparagine 107, asparagine 114, glutamine 120, aspartate 122, asparagine 124, tyrosine 128, and tryptophan 133 each contribute to the alpha-D-mannopyranose site. Cysteine 59 and cysteine 83 are joined by a disulfide.

As to quaternary structure, homodimer.

Its subcellular location is the secreted. Its function is as follows. Mannose-specific lectin. Shows agglutinating activity towards rabbit erythrocytes. However, it does not show agglutinating activity towards human erythrocytes. Has insecticidal activity against the cotton leafworm S.littoralis and the peach potato aphid M.persicae. Also displays antiviral activity and therefore may contribute to defense against infections. In Allium sativum (Garlic), this protein is Mannose-specific lectin.